The sequence spans 202 residues: Dephospho-CoA kinase (202 aa).

In terms of domain architecture, DPCK spans 5 to 202 (VIGLTGGIGS…KKYLTLTKMV (198 aa)). Residue 13 to 18 (GSGKTT) participates in ATP binding.

Belongs to the CoaE family.

The protein resides in the cytoplasm. The enzyme catalyses 3'-dephospho-CoA + ATP = ADP + CoA + H(+). It participates in cofactor biosynthesis; coenzyme A biosynthesis; CoA from (R)-pantothenate: step 5/5. Catalyzes the phosphorylation of the 3'-hydroxyl group of dephosphocoenzyme A to form coenzyme A. In Colwellia psychrerythraea (strain 34H / ATCC BAA-681) (Vibrio psychroerythus), this protein is Dephospho-CoA kinase.